A 37-amino-acid chain; its full sequence is Large ribosomal subunit protein bL36 (37 aa).

It belongs to the bacterial ribosomal protein bL36 family.

The chain is Large ribosomal subunit protein bL36 from Thermosynechococcus vestitus (strain NIES-2133 / IAM M-273 / BP-1).